A 333-amino-acid polypeptide reads, in one-letter code: Holliday junction branch migration complex subunit RuvB (333 aa).

Residues 1–182 (MEERIVSAEA…FGVMARLEYY (182 aa)) form a large ATPase domain (RuvB-L) region. ATP is bound by residues Leu-21, Arg-22, Gly-63, Lys-66, Thr-67, Thr-68, 129-131 (EDF), Arg-172, Tyr-182, and Arg-219. Thr-67 is a Mg(2+) binding site. The small ATPAse domain (RuvB-S) stretch occupies residues 183 to 253 (KPEELAQIVE…RACSALEQLH (71 aa)). The tract at residues 256-333 (PLGLDHIDDK…AHYGVEKQNG (78 aa)) is head domain (RuvB-H). DNA-binding residues include Arg-311 and Arg-316.

Belongs to the RuvB family. As to quaternary structure, homohexamer. Forms an RuvA(8)-RuvB(12)-Holliday junction (HJ) complex. HJ DNA is sandwiched between 2 RuvA tetramers; dsDNA enters through RuvA and exits via RuvB. An RuvB hexamer assembles on each DNA strand where it exits the tetramer. Each RuvB hexamer is contacted by two RuvA subunits (via domain III) on 2 adjacent RuvB subunits; this complex drives branch migration. In the full resolvosome a probable DNA-RuvA(4)-RuvB(12)-RuvC(2) complex forms which resolves the HJ.

It is found in the cytoplasm. It catalyses the reaction ATP + H2O = ADP + phosphate + H(+). The RuvA-RuvB-RuvC complex processes Holliday junction (HJ) DNA during genetic recombination and DNA repair, while the RuvA-RuvB complex plays an important role in the rescue of blocked DNA replication forks via replication fork reversal (RFR). RuvA specifically binds to HJ cruciform DNA, conferring on it an open structure. The RuvB hexamer acts as an ATP-dependent pump, pulling dsDNA into and through the RuvAB complex. RuvB forms 2 homohexamers on either side of HJ DNA bound by 1 or 2 RuvA tetramers; 4 subunits per hexamer contact DNA at a time. Coordinated motions by a converter formed by DNA-disengaged RuvB subunits stimulates ATP hydrolysis and nucleotide exchange. Immobilization of the converter enables RuvB to convert the ATP-contained energy into a lever motion, pulling 2 nucleotides of DNA out of the RuvA tetramer per ATP hydrolyzed, thus driving DNA branch migration. The RuvB motors rotate together with the DNA substrate, which together with the progressing nucleotide cycle form the mechanistic basis for DNA recombination by continuous HJ branch migration. Branch migration allows RuvC to scan DNA until it finds its consensus sequence, where it cleaves and resolves cruciform DNA. This Shouchella clausii (strain KSM-K16) (Alkalihalobacillus clausii) protein is Holliday junction branch migration complex subunit RuvB.